A 66-amino-acid chain; its full sequence is Large ribosomal subunit protein bL33c (66 aa).

Belongs to the bacterial ribosomal protein bL33 family.

The protein localises to the plastid. The protein resides in the chloroplast. The protein is Large ribosomal subunit protein bL33c of Helianthus annuus (Common sunflower).